The chain runs to 100 residues: Urease subunit gamma (100 aa).

This sequence belongs to the urease gamma subunit family. Heterotrimer of UreA (gamma), UreB (beta) and UreC (alpha) subunits. Three heterotrimers associate to form the active enzyme.

It is found in the cytoplasm. It carries out the reaction urea + 2 H2O + H(+) = hydrogencarbonate + 2 NH4(+). Its pathway is nitrogen metabolism; urea degradation; CO(2) and NH(3) from urea (urease route): step 1/1. The protein is Urease subunit gamma of Hahella chejuensis (strain KCTC 2396).